Reading from the N-terminus, the 609-residue chain is Protein kinase PVPK-1 (609 aa).

The segment covering 1-19 has biased composition (polar residues); it reads MESSVNGVDSLSEVQNSVS. Disordered stretches follow at residues 1–51 and 80–100; these read MESS…GHQT and PTKL…EPNG. The Protein kinase domain occupies 229–565; sequence FRLLKKLGCG…ATEIKQHPFF (337 aa). ATP is bound by residues 235–243 and lysine 258; that span reads LGCGDIGSV. Aspartate 354 (proton acceptor) is an active-site residue. The disordered stretch occupies residues 429–448; that stretch reads GKSKKDKKSKPKNDMHNQVT.

It belongs to the protein kinase superfamily. Ser/Thr protein kinase family.

The catalysed reaction is L-seryl-[protein] + ATP = O-phospho-L-seryl-[protein] + ADP + H(+). The enzyme catalyses L-threonyl-[protein] + ATP = O-phospho-L-threonyl-[protein] + ADP + H(+). In Phaseolus vulgaris (Kidney bean), this protein is Protein kinase PVPK-1.